The following is a 105-amino-acid chain: Large ribosomal subunit protein uL24 (105 aa).

It belongs to the universal ribosomal protein uL24 family. In terms of assembly, part of the 50S ribosomal subunit.

In terms of biological role, one of two assembly initiator proteins, it binds directly to the 5'-end of the 23S rRNA, where it nucleates assembly of the 50S subunit. One of the proteins that surrounds the polypeptide exit tunnel on the outside of the subunit. The polypeptide is Large ribosomal subunit protein uL24 (Clostridium kluyveri (strain ATCC 8527 / DSM 555 / NBRC 12016 / NCIMB 10680 / K1)).